We begin with the raw amino-acid sequence, 229 residues long: Urease accessory protein UreF (229 aa).

It belongs to the UreF family. UreD, UreF and UreG form a complex that acts as a GTP-hydrolysis-dependent molecular chaperone, activating the urease apoprotein by helping to assemble the nickel containing metallocenter of UreC. The UreE protein probably delivers the nickel.

Its subcellular location is the cytoplasm. In terms of biological role, required for maturation of urease via the functional incorporation of the urease nickel metallocenter. The polypeptide is Urease accessory protein UreF (Corynebacterium efficiens (strain DSM 44549 / YS-314 / AJ 12310 / JCM 11189 / NBRC 100395)).